The chain runs to 341 residues: UDP-3-O-acylglucosamine N-acyltransferase (341 aa).

The active-site Proton acceptor is histidine 242.

Belongs to the transferase hexapeptide repeat family. LpxD subfamily. In terms of assembly, homotrimer.

It carries out the reaction a UDP-3-O-[(3R)-3-hydroxyacyl]-alpha-D-glucosamine + a (3R)-hydroxyacyl-[ACP] = a UDP-2-N,3-O-bis[(3R)-3-hydroxyacyl]-alpha-D-glucosamine + holo-[ACP] + H(+). Its pathway is bacterial outer membrane biogenesis; LPS lipid A biosynthesis. In terms of biological role, catalyzes the N-acylation of UDP-3-O-acylglucosamine using 3-hydroxyacyl-ACP as the acyl donor. Is involved in the biosynthesis of lipid A, a phosphorylated glycolipid that anchors the lipopolysaccharide to the outer membrane of the cell. This Haemophilus influenzae (strain ATCC 51907 / DSM 11121 / KW20 / Rd) protein is UDP-3-O-acylglucosamine N-acyltransferase.